The chain runs to 359 residues: Salicylate carboxymethyltransferase (359 aa).

Tyr18 provides a ligand contact to S-adenosyl-L-methionine. Substrate is bound by residues Tyr18, 21-25 (NSFIQ), and Gln25. Residues Gly59, 59–60 (GC), 59–61 (GCS), Asn65, 96–99 (LNDL), Asp98, 129–131 (SFY), and 146–148 (SYS) each bind S-adenosyl-L-methionine. Substrate is bound by residues 147 to 151 (YSLMW) and Trp151. Residues Asn162, Asp248, Phe250, and Asn251 each contribute to the Mg(2+) site. Position 255 (Tyr255) interacts with substrate.

Belongs to the methyltransferase superfamily. SABATH family.

It carries out the reaction salicylate + S-adenosyl-L-methionine = methyl salicylate + S-adenosyl-L-homocysteine. Its function is as follows. Catalyzes the methylation of the free carboxyl end of the plant hormone salicylic acid (SA). Converts SA to SA methyl ester (MSA). The volatile compound MSA is hypothesized to act as an airborne signal that triggers defense responses in uninfected plants. MSA is an important chemoattractant for moth pollinated flowering plants. The protein is Salicylate carboxymethyltransferase (SAMT) of Clarkia breweri (Fairy fans).